Consider the following 466-residue polypeptide: Argininosuccinate lyase (466 aa).

It belongs to the lyase 1 family. Argininosuccinate lyase subfamily.

It localises to the cytoplasm. The enzyme catalyses 2-(N(omega)-L-arginino)succinate = fumarate + L-arginine. Its pathway is amino-acid biosynthesis; L-arginine biosynthesis; L-arginine from L-ornithine and carbamoyl phosphate: step 3/3. This Bartonella tribocorum (strain CIP 105476 / IBS 506) protein is Argininosuccinate lyase.